A 110-amino-acid polypeptide reads, in one-letter code: Urease subunit beta (110 aa).

This sequence belongs to the urease beta subunit family. As to quaternary structure, heterotrimer of UreA (gamma), UreB (beta) and UreC (alpha) subunits. Three heterotrimers associate to form the active enzyme.

It localises to the cytoplasm. It carries out the reaction urea + 2 H2O + H(+) = hydrogencarbonate + 2 NH4(+). It participates in nitrogen metabolism; urea degradation; CO(2) and NH(3) from urea (urease route): step 1/1. The polypeptide is Urease subunit beta (Pseudoalteromonas translucida (strain TAC 125)).